The primary structure comprises 404 residues: Phosphopentomutase (404 aa).

Residues Asp10, Asp303, His308, Asp344, His345, and His356 each contribute to the Mn(2+) site.

It belongs to the phosphopentomutase family. Requires Mn(2+) as cofactor.

The protein resides in the cytoplasm. It carries out the reaction 2-deoxy-alpha-D-ribose 1-phosphate = 2-deoxy-D-ribose 5-phosphate. It catalyses the reaction alpha-D-ribose 1-phosphate = D-ribose 5-phosphate. It participates in carbohydrate degradation; 2-deoxy-D-ribose 1-phosphate degradation; D-glyceraldehyde 3-phosphate and acetaldehyde from 2-deoxy-alpha-D-ribose 1-phosphate: step 1/2. Isomerase that catalyzes the conversion of deoxy-ribose 1-phosphate (dRib-1-P) and ribose 1-phosphate (Rib-1-P) to deoxy-ribose 5-phosphate (dRib-5-P) and ribose 5-phosphate (Rib-5-P), respectively. The protein is Phosphopentomutase of Shewanella sp. (strain MR-7).